Consider the following 210-residue polypeptide: Thiamine-phosphate synthase (210 aa).

4-amino-2-methyl-5-(diphosphooxymethyl)pyrimidine contacts are provided by residues 34-38 and N66; that span reads QLRHK. Positions 67 and 86 each coordinate Mg(2+). S105 lines the 4-amino-2-methyl-5-(diphosphooxymethyl)pyrimidine pocket. 131-133 provides a ligand contact to 2-[(2R,5Z)-2-carboxy-4-methylthiazol-5(2H)-ylidene]ethyl phosphate; the sequence is TSS. Residue K134 participates in 4-amino-2-methyl-5-(diphosphooxymethyl)pyrimidine binding. G162 is a 2-[(2R,5Z)-2-carboxy-4-methylthiazol-5(2H)-ylidene]ethyl phosphate binding site.

This sequence belongs to the thiamine-phosphate synthase family. It depends on Mg(2+) as a cofactor.

It carries out the reaction 2-[(2R,5Z)-2-carboxy-4-methylthiazol-5(2H)-ylidene]ethyl phosphate + 4-amino-2-methyl-5-(diphosphooxymethyl)pyrimidine + 2 H(+) = thiamine phosphate + CO2 + diphosphate. The catalysed reaction is 2-(2-carboxy-4-methylthiazol-5-yl)ethyl phosphate + 4-amino-2-methyl-5-(diphosphooxymethyl)pyrimidine + 2 H(+) = thiamine phosphate + CO2 + diphosphate. The enzyme catalyses 4-methyl-5-(2-phosphooxyethyl)-thiazole + 4-amino-2-methyl-5-(diphosphooxymethyl)pyrimidine + H(+) = thiamine phosphate + diphosphate. It participates in cofactor biosynthesis; thiamine diphosphate biosynthesis; thiamine phosphate from 4-amino-2-methyl-5-diphosphomethylpyrimidine and 4-methyl-5-(2-phosphoethyl)-thiazole: step 1/1. Its function is as follows. Condenses 4-methyl-5-(beta-hydroxyethyl)thiazole monophosphate (THZ-P) and 2-methyl-4-amino-5-hydroxymethyl pyrimidine pyrophosphate (HMP-PP) to form thiamine monophosphate (TMP). This Chlorobium limicola (strain DSM 245 / NBRC 103803 / 6330) protein is Thiamine-phosphate synthase.